Reading from the N-terminus, the 368-residue chain is Putative glutamate--cysteine ligase 2 (368 aa).

The protein belongs to the glutamate--cysteine ligase type 2 family. YbdK subfamily.

The enzyme catalyses L-cysteine + L-glutamate + ATP = gamma-L-glutamyl-L-cysteine + ADP + phosphate + H(+). Functionally, ATP-dependent carboxylate-amine ligase which exhibits weak glutamate--cysteine ligase activity. The polypeptide is Putative glutamate--cysteine ligase 2 (Pseudomonas putida (strain ATCC 47054 / DSM 6125 / CFBP 8728 / NCIMB 11950 / KT2440)).